We begin with the raw amino-acid sequence, 152 residues long: Lipoprotein signal peptidase (152 aa).

Transmembrane regions (helical) follow at residues 55 to 75 and 87 to 107; these read NGRW…LYYL and VALG…IATG. Catalysis depends on residues Asp-111 and Asp-129. Residues 125–145 form a helical membrane-spanning segment; it reads FNVADICVTVGVGLLFLHLVL.

Belongs to the peptidase A8 family.

Its subcellular location is the cell membrane. It catalyses the reaction Release of signal peptides from bacterial membrane prolipoproteins. Hydrolyzes -Xaa-Yaa-Zaa-|-(S,diacylglyceryl)Cys-, in which Xaa is hydrophobic (preferably Leu), and Yaa (Ala or Ser) and Zaa (Gly or Ala) have small, neutral side chains.. It functions in the pathway protein modification; lipoprotein biosynthesis (signal peptide cleavage). This protein specifically catalyzes the removal of signal peptides from prolipoproteins. This is Lipoprotein signal peptidase from Symbiobacterium thermophilum (strain DSM 24528 / JCM 14929 / IAM 14863 / T).